The following is a 418-amino-acid chain: Diaminopimelate decarboxylase (418 aa).

Lys-53 carries the post-translational modification N6-(pyridoxal phosphate)lysine. Pyridoxal 5'-phosphate-binding positions include Gly-223 and Glu-264–Arg-267. Residues Arg-267, Arg-303, and Tyr-307 each coordinate substrate. Catalysis depends on Cys-338, which acts as the Proton donor. Substrate-binding residues include Glu-339 and Tyr-374. Position 374 (Tyr-374) interacts with pyridoxal 5'-phosphate.

This sequence belongs to the Orn/Lys/Arg decarboxylase class-II family. LysA subfamily. Homodimer. It depends on pyridoxal 5'-phosphate as a cofactor.

It catalyses the reaction meso-2,6-diaminopimelate + H(+) = L-lysine + CO2. It participates in amino-acid biosynthesis; L-lysine biosynthesis via DAP pathway; L-lysine from DL-2,6-diaminopimelate: step 1/1. Functionally, specifically catalyzes the decarboxylation of meso-diaminopimelate (meso-DAP) to L-lysine. This chain is Diaminopimelate decarboxylase, found in Buchnera aphidicola subsp. Baizongia pistaciae (strain Bp).